The chain runs to 104 residues: Acetylcholine receptor subunit alpha (104 aa).

Topologically, residues 1 to 104 (NPPAIFKSYC…YFIVNVIIPC (104 aa)) are extracellular. Cystine bridges form between Cys10/Cys24 and Cys74/Cys75. Asn23 carries N-linked (GlcNAc...) asparagine glycosylation.

The protein belongs to the ligand-gated ion channel (TC 1.A.9) family. Acetylcholine receptor (TC 1.A.9.1) subfamily. Alpha-1/CHRNA1 sub-subfamily. As to quaternary structure, one of the alpha chains that assemble within the acetylcholine receptor, a pentamer of two alpha chains, a beta, a delta, and a gamma or epsilon chains.

It localises to the postsynaptic cell membrane. Its subcellular location is the cell membrane. The enzyme catalyses K(+)(in) = K(+)(out). It carries out the reaction Na(+)(in) = Na(+)(out). Upon acetylcholine binding, the AChR responds by an extensive change in conformation that affects all subunits and leads to opening of an ion-conducting channel across the plasma membrane. This Naja naja (Indian cobra) protein is Acetylcholine receptor subunit alpha (CHRNA1).